The primary structure comprises 152 residues: Lipoprotein signal peptidase (152 aa).

Transmembrane regions (helical) follow at residues 55-75 (NKMW…VFYM) and 85-105 (LGIS…DRVF). Residues Asp111 and Asp129 contribute to the active site. Residues 124 to 144 (VFNIADSALCIGVVLIIIQTL) form a helical membrane-spanning segment.

This sequence belongs to the peptidase A8 family.

It is found in the cell membrane. The catalysed reaction is Release of signal peptides from bacterial membrane prolipoproteins. Hydrolyzes -Xaa-Yaa-Zaa-|-(S,diacylglyceryl)Cys-, in which Xaa is hydrophobic (preferably Leu), and Yaa (Ala or Ser) and Zaa (Gly or Ala) have small, neutral side chains.. It functions in the pathway protein modification; lipoprotein biosynthesis (signal peptide cleavage). This protein specifically catalyzes the removal of signal peptides from prolipoproteins. This Bacillus cereus (strain B4264) protein is Lipoprotein signal peptidase.